Here is a 265-residue protein sequence, read N- to C-terminus: Zinc import ATP-binding protein ZnuC (265 aa).

Residues 6–221 (IRLEQVAVTL…PAFVELFGKN (216 aa)) enclose the ABC transporter domain. Position 38–45 (38–45 (GPNGAGKT)) interacts with ATP. The segment at 245–265 (DAPATSSHTHTHVHGDHCKHG) is disordered.

Belongs to the ABC transporter superfamily. Zinc importer (TC 3.A.1.15.5) family. In terms of assembly, the complex is composed of two ATP-binding proteins (ZnuC), two transmembrane proteins (ZnuB) and a solute-binding protein (ZnuA).

Its subcellular location is the cell inner membrane. It carries out the reaction Zn(2+)(out) + ATP(in) + H2O(in) = Zn(2+)(in) + ADP(in) + phosphate(in) + H(+)(in). Part of the ABC transporter complex ZnuABC involved in zinc import. Responsible for energy coupling to the transport system. This is Zinc import ATP-binding protein ZnuC from Pseudomonas savastanoi pv. phaseolicola (strain 1448A / Race 6) (Pseudomonas syringae pv. phaseolicola (strain 1448A / Race 6)).